A 242-amino-acid polypeptide reads, in one-letter code: Biosynthetic peptidoglycan transglycosylase (242 aa).

Residues 19 to 39 (ILVVLAVFWGGGIALFSVVPV) traverse the membrane as a helical segment.

Belongs to the glycosyltransferase 51 family.

It localises to the cell inner membrane. It catalyses the reaction [GlcNAc-(1-&gt;4)-Mur2Ac(oyl-L-Ala-gamma-D-Glu-L-Lys-D-Ala-D-Ala)](n)-di-trans,octa-cis-undecaprenyl diphosphate + beta-D-GlcNAc-(1-&gt;4)-Mur2Ac(oyl-L-Ala-gamma-D-Glu-L-Lys-D-Ala-D-Ala)-di-trans,octa-cis-undecaprenyl diphosphate = [GlcNAc-(1-&gt;4)-Mur2Ac(oyl-L-Ala-gamma-D-Glu-L-Lys-D-Ala-D-Ala)](n+1)-di-trans,octa-cis-undecaprenyl diphosphate + di-trans,octa-cis-undecaprenyl diphosphate + H(+). It functions in the pathway cell wall biogenesis; peptidoglycan biosynthesis. Peptidoglycan polymerase that catalyzes glycan chain elongation from lipid-linked precursors. This is Biosynthetic peptidoglycan transglycosylase from Citrobacter koseri (strain ATCC BAA-895 / CDC 4225-83 / SGSC4696).